Reading from the N-terminus, the 442-residue chain is D-galactonate dehydratase family member SSBG_02010 (442 aa).

D246 provides a ligand contact to Mg(2+). Residue H248 participates in D-arabinonate binding. Mg(2+)-binding residues include E272 and E298. D-arabinonate is bound by residues E298, R319, H348, and E375.

It belongs to the mandelate racemase/muconate lactonizing enzyme family. GalD subfamily.

Functionally, has no detectable activity with D-mannonate and with a panel of 70 other acid sugars (in vitro), in spite of the conservation of the residues that are expected to be important for catalytic activity and cofactor binding. May have evolved a divergent function. The sequence is that of D-galactonate dehydratase family member SSBG_02010 from Streptomyces sp. (strain SPB074).